The primary structure comprises 530 residues: Feruloyl esterase C (530 aa).

Residues 1 to 25 form the signal peptide; sequence MMLTSAILLLTLGVQLSHADDSSRE. Disulfide bonds link Cys31/Cys78, Cys66/Cys117, Cys190/Cys444, Cys259/Cys276, Cys285/Cys294, and Cys506/Cys528. The Acyl-ester intermediate role is filled by Ser191. The Ca(2+) site is built by Asp260, Asp263, Ala265, Asp267, and Val269. Active-site charge relay system residues include Asp403 and His443.

It belongs to the tannase family.

The protein localises to the secreted. The catalysed reaction is feruloyl-polysaccharide + H2O = ferulate + polysaccharide.. In terms of biological role, involved in degradation of plant cell walls. Hydrolyzes the feruloyl-arabinose ester bond in arabinoxylans as well as the feruloyl-galactose and feruloyl-arabinose ester bonds in pectin. Active against methyl esters of sinapate (MSA) and caffeate (MCA). This is Feruloyl esterase C (faeC) from Talaromyces stipitatus (strain ATCC 10500 / CBS 375.48 / QM 6759 / NRRL 1006) (Penicillium stipitatum).